The following is a 552-amino-acid chain: Rqc2 homolog RqcH (552 aa).

Coiled coils occupy residues 271–317 (RDRV…QKGE) and 357–398 (NAQR…MLGQ).

Belongs to the NEMF family. Associates with stalled 50S ribosomal subunits, binds to RqcH. Recombinant protein interacts with the N-terminal 30 kDa of human fibronectin (FN1).

Key component of the ribosome quality control system (RQC), a ribosome-associated complex that mediates the extraction of incompletely synthesized nascent chains from stalled ribosomes and their subsequent degradation. RqcH recruits Ala-charged tRNA, and with RqcP directs the elongation of stalled nascent chains on 50S ribosomal subunits, leading to non-templated C-terminal alanine extensions (Ala tail). The Ala tail promotes nascent chain degradation. May add between 1 and at least 8 Ala residues. Binds to stalled 50S ribosomal subunits. This chain is Rqc2 homolog RqcH, found in Streptococcus suis (strain 05ZYH33).